A 92-amino-acid chain; its full sequence is Small ribosomal subunit protein uS19 (92 aa).

Belongs to the universal ribosomal protein uS19 family.

Its function is as follows. Protein S19 forms a complex with S13 that binds strongly to the 16S ribosomal RNA. This Brucella ovis (strain ATCC 25840 / 63/290 / NCTC 10512) protein is Small ribosomal subunit protein uS19.